We begin with the raw amino-acid sequence, 360 residues long: MPTQFAPLQNDTFLRALLRQPTEYTPLWLMRQAGRYLPEYRATRARAGSFLGLAKNPDFATEVTLQPLDRYKLDAAILFSDILTVPDAMGLGLYFIEGEGPKFERPLRDEKAVQALKVPELGSLQYVFDAVTQIRTELKGRVPLIGFTGSPWTLACYMVEGGGSDDFRTVKAMLYNRPDLMHHILQTNALTVAAYLNAQIDAGAQAVMMFDTWGGALADGAYQQFSLHYMREVMKHVKTEKDGVRIPSIVFTKGGGLWLKEIAAVGADAVGLDWTVNLGAARAKVGERVALQGNLDPSILFAQPDQIRAEVAKVLESFGKHSAGSGHVFNLGHGISQFTPPEAVTVLVDAVHELSRPLHK.

Substrate-binding positions include 31–35 (RQAGR), Asp81, Tyr157, Thr212, and His333.

It belongs to the uroporphyrinogen decarboxylase family. Homodimer.

The protein localises to the cytoplasm. The enzyme catalyses uroporphyrinogen III + 4 H(+) = coproporphyrinogen III + 4 CO2. The protein operates within porphyrin-containing compound metabolism; protoporphyrin-IX biosynthesis; coproporphyrinogen-III from 5-aminolevulinate: step 4/4. Its function is as follows. Catalyzes the decarboxylation of four acetate groups of uroporphyrinogen-III to yield coproporphyrinogen-III. The sequence is that of Uroporphyrinogen decarboxylase from Janthinobacterium sp. (strain Marseille) (Minibacterium massiliensis).